We begin with the raw amino-acid sequence, 592 residues long: UvrABC system protein C (592 aa).

The region spanning Ala15 to Ile92 is the GIY-YIG domain. A UVR domain is found at Asp197–Thr232.

It belongs to the UvrC family. In terms of assembly, interacts with UvrB in an incision complex.

The protein resides in the cytoplasm. In terms of biological role, the UvrABC repair system catalyzes the recognition and processing of DNA lesions. UvrC both incises the 5' and 3' sides of the lesion. The N-terminal half is responsible for the 3' incision and the C-terminal half is responsible for the 5' incision. The polypeptide is UvrABC system protein C (Latilactobacillus sakei subsp. sakei (strain 23K) (Lactobacillus sakei subsp. sakei)).